Consider the following 82-residue polypeptide: RNA-binding protein BPUM_0095 (82 aa).

This sequence belongs to the eukaryotic ribosomal protein eL8 family.

The protein is RNA-binding protein BPUM_0095 of Bacillus pumilus (strain SAFR-032).